The primary structure comprises 150 residues: Ribosome maturation factor RimP (150 aa).

The protein belongs to the RimP family.

It localises to the cytoplasm. Its function is as follows. Required for maturation of 30S ribosomal subunits. This is Ribosome maturation factor RimP from Francisella philomiragia subsp. philomiragia (strain ATCC 25017 / CCUG 19701 / FSC 153 / O#319-036).